The chain runs to 605 residues: Replication and transcription activator (605 aa).

2 disordered regions span residues 307 to 380 (SLPS…AEPE) and 447 to 499 (RIRP…AVTP). The span at 321 to 338 (SADCGDSSSSSSDSGNSD) shows a compositional bias: low complexity. Residues 341 to 353 (QSEREEARAEAPR) show a composition bias toward basic and acidic residues. Over residues 355 to 364 (RAPKSRRTSR) the composition is skewed to basic residues.

The protein belongs to the herpesviridae Rta family. In terms of assembly, interacts with human ATF7IP protein, leading to promote and regulate host genes in virus-infected cells. Interacts with RNA polymerase III complex; this interaction downregulates small RNA transcription and 5'-pppRNA production.

The protein localises to the host nucleus. It is found in the virion tegument. Its function is as follows. Immediate-early transcription factor that controls the initiation of viral lytic gene expression and lytic reactivation from latency. Triggers lytic replication, and initiates a cellular senescence program in epithelial cells. Up-regulates human DCR3/TNFRSF6B by directly binding to its receptor. Globally induces a proteasome-dependent loss of SUMOylated proteins in the host cell and the loss of promeylocytic leukemia nuclear bodies. Improves the stability of the triplex capsid protein TRX1 by reducing the ubiquitination level of the latter. Mediates evasion of inflammasome activation and antiviral responses (T- and NK cell activation) during EBV early lytic infection. The chain is Replication and transcription activator from Epstein-Barr virus (strain B95-8) (HHV-4).